The primary structure comprises 94 residues: C-C motif chemokine 17 (94 aa).

An N-terminal signal peptide occupies residues 1–23 (MAPLKMLALVILLLGASLQHIHA). 2 disulfides stabilise this stretch: C33-C57 and C34-C73.

Belongs to the intercrine beta (chemokine CC) family.

It is found in the secreted. Functionally, chemokine, which displays chemotactic activity for T lymphocytes, preferentially Th2 cells, but not monocytes or granulocytes. Therefore plays an important role in a wide range of inflammatory and immunological processes. Acts by binding to CCR4 at T-cell surface. Mediates GM-CSF/CSF2-driven pain and inflammation. In the brain, required to maintain the typical, highly branched morphology of hippocampal microglia under homeostatic conditions. May be important for the appropriate adaptation of microglial morphology and synaptic plasticity to acute lipopolysaccharide (LPS)-induced neuroinflammation. Plays a role in wound healing, mainly by inducing fibroblast migration into the wound. This is C-C motif chemokine 17 (CCL17) from Macaca mulatta (Rhesus macaque).